Reading from the N-terminus, the 185-residue chain is Ribosome-recycling factor (185 aa).

The protein belongs to the RRF family.

The protein localises to the cytoplasm. Functionally, responsible for the release of ribosomes from messenger RNA at the termination of protein biosynthesis. May increase the efficiency of translation by recycling ribosomes from one round of translation to another. The polypeptide is Ribosome-recycling factor (Erwinia tasmaniensis (strain DSM 17950 / CFBP 7177 / CIP 109463 / NCPPB 4357 / Et1/99)).